Here is a 435-residue protein sequence, read N- to C-terminus: Maltodextrin transport system permease protein MdxF (435 aa).

8 consecutive transmembrane segments (helical) span residues 35-55 (LLFL…GIQA), 73-93 (FMLI…MFYI), 136-156 (AYIM…FVAL), 199-219 (VIWT…TALF), 234-254 (IFLF…SNMF), 293-313 (LIMI…TGVL), 337-357 (HITF…QYTF), and 403-423 (VAAA…LIAF). An ABC transmembrane type-1 domain is found at 195–422 (LGWTVIWTIC…FIVIGISLIA (228 aa)).

The protein belongs to the binding-protein-dependent transport system permease family. MalFG subfamily. As to quaternary structure, the complex is composed of two ATP-binding proteins (MsmX), two transmembrane proteins (MdxF and MdxG) and a solute-binding protein (MdxE).

The protein resides in the cell membrane. In terms of biological role, part of the ABC transporter complex involved in maltodextrin import. Probably responsible for the translocation of the substrate across the membrane. In Bacillus subtilis (strain 168), this protein is Maltodextrin transport system permease protein MdxF (mdxF).